Reading from the N-terminus, the 622-residue chain is Probable potassium transport system protein Kup 2 (622 aa).

The next 12 helical transmembrane spans lie at 9 to 29, 46 to 66, 99 to 119, 137 to 157, 169 to 189, 213 to 233, 247 to 267, 285 to 305, 337 to 357, 363 to 383, 396 to 416, and 419 to 439; these read LSGV…TSPL, PASI…VVSV, TPLL…EVVI, PSLD…LFAI, FAPI…NSIF, ASFF…ALYA, WFMV…ALLL, ALLP…QAVI, IYIP…IMSF, LAAA…ILSC, LVAA…AANL, and IFSG…VMTS.

It belongs to the HAK/KUP transporter (TC 2.A.72) family.

Its subcellular location is the cell inner membrane. It catalyses the reaction K(+)(in) + H(+)(in) = K(+)(out) + H(+)(out). Functionally, transport of potassium into the cell. Likely operates as a K(+):H(+) symporter. This Aeromonas hydrophila subsp. hydrophila (strain ATCC 7966 / DSM 30187 / BCRC 13018 / CCUG 14551 / JCM 1027 / KCTC 2358 / NCIMB 9240 / NCTC 8049) protein is Probable potassium transport system protein Kup 2.